Reading from the N-terminus, the 280-residue chain is Tritrans,polycis-undecaprenyl-diphosphate synthase (geranylgeranyl-diphosphate specific) (280 aa).

Residue Asp57 is part of the active site. Asp57 lines the Mg(2+) pocket. Substrate-binding positions include 58–61 (GNRR), Arg70, His74, and 102–104 (STE). Asn105 (proton acceptor) is an active-site residue. Substrate-binding positions include Phe106, Arg108, Arg229, and 235–237 (RIS). Glu248 lines the Mg(2+) pocket.

Belongs to the UPP synthase family. As to quaternary structure, homodimer. Requires Mg(2+) as cofactor.

The catalysed reaction is geranylgeranyl diphosphate + 7 isopentenyl diphosphate = tri-trans,hepta-cis-undecaprenyl diphosphate + 7 diphosphate. Its function is as follows. Catalyzes the sequential condensation of isopentenyl diphosphate (IPP) with geranylgeranyl diphosphate (GGPP) to yield (2Z,6Z,10Z,14Z,18Z,22Z,26Z,30E,34E,38E)-undecaprenyl diphosphate (tritrans,heptacis-UPP). It is probably the precursor of glycosyl carrier lipids. In Methanocaldococcus jannaschii (strain ATCC 43067 / DSM 2661 / JAL-1 / JCM 10045 / NBRC 100440) (Methanococcus jannaschii), this protein is Tritrans,polycis-undecaprenyl-diphosphate synthase (geranylgeranyl-diphosphate specific).